A 148-amino-acid chain; its full sequence is FAD synthase (148 aa).

ATP-binding positions include 11 to 12 (TF), 16 to 19 (HPGH), N94, and Y121.

The protein belongs to the archaeal FAD synthase family. As to quaternary structure, homodimer. The cofactor is a divalent metal cation.

The catalysed reaction is FMN + ATP + H(+) = FAD + diphosphate. The protein operates within cofactor biosynthesis; FAD biosynthesis; FAD from FMN: step 1/1. Functionally, catalyzes the transfer of the AMP portion of ATP to flavin mononucleotide (FMN) to produce flavin adenine dinucleotide (FAD) coenzyme. This chain is FAD synthase, found in Methanoregula boonei (strain DSM 21154 / JCM 14090 / 6A8).